Consider the following 247-residue polypeptide: Translation initiation factor IF-3 (247 aa).

2 disordered regions span residues 1–20 (MIREQRSSRGGSRDQRTNRR) and 188–247 (LVRQ…PTAS). The needed for vegetative and developmental functions, but not for viability stretch occupies residues 182 to 247 (AQKARELVRQ…AAEAQSPTAS (66 aa)). Residues 207 to 217 (AGKSAAGASSG) are compositionally biased toward low complexity. Residues 218 to 232 (AEEKAEETAEEKKEA) show a composition bias toward basic and acidic residues. The segment covering 233–247 (QAAPAAAEAQSPTAS) has biased composition (low complexity).

Belongs to the IF-3 family. Monomer.

It is found in the cytoplasm. IF-3 binds to the 30S ribosomal subunit and shifts the equilibrium between 70S ribosomes and their 50S and 30S subunits in favor of the free subunits, thus enhancing the availability of 30S subunits on which protein synthesis initiation begins. The sequence is that of Translation initiation factor IF-3 from Myxococcus xanthus.